A 425-amino-acid chain; its full sequence is Serine--tRNA ligase (425 aa).

L-serine is bound at residue Thr-233–Glu-235. Residue Arg-264–Glu-266 participates in ATP binding. L-serine is bound at residue Glu-287. Glu-351–Ser-354 contributes to the ATP binding site. Residue Ser-385 coordinates L-serine.

Belongs to the class-II aminoacyl-tRNA synthetase family. Type-1 seryl-tRNA synthetase subfamily. In terms of assembly, homodimer. The tRNA molecule binds across the dimer.

It localises to the cytoplasm. The catalysed reaction is tRNA(Ser) + L-serine + ATP = L-seryl-tRNA(Ser) + AMP + diphosphate + H(+). The enzyme catalyses tRNA(Sec) + L-serine + ATP = L-seryl-tRNA(Sec) + AMP + diphosphate + H(+). It participates in aminoacyl-tRNA biosynthesis; selenocysteinyl-tRNA(Sec) biosynthesis; L-seryl-tRNA(Sec) from L-serine and tRNA(Sec): step 1/1. Its function is as follows. Catalyzes the attachment of serine to tRNA(Ser). Is also able to aminoacylate tRNA(Sec) with serine, to form the misacylated tRNA L-seryl-tRNA(Sec), which will be further converted into selenocysteinyl-tRNA(Sec). This is Serine--tRNA ligase from Synechococcus sp. (strain CC9902).